The sequence spans 141 residues: Nucleoside triphosphatase NudI (141 aa).

Residues 1–141 (MRQRTIVCPL…RVTLSQKGLL (141 aa)) enclose the Nudix hydrolase domain. The short motif at 38–59 (GGVEPVERIEEALRREIREELG) is the Nudix box element.

The protein belongs to the Nudix hydrolase family. NudI subfamily. Monomer. It depends on Mg(2+) as a cofactor.

It catalyses the reaction a ribonucleoside 5'-triphosphate + H2O = a ribonucleoside 5'-phosphate + diphosphate + H(+). It carries out the reaction a 2'-deoxyribonucleoside 5'-triphosphate + H2O = a 2'-deoxyribonucleoside 5'-phosphate + diphosphate + H(+). The enzyme catalyses dUTP + H2O = dUMP + diphosphate + H(+). The catalysed reaction is dTTP + H2O = dTMP + diphosphate + H(+). It catalyses the reaction dCTP + H2O = dCMP + diphosphate + H(+). In terms of biological role, catalyzes the hydrolysis of nucleoside triphosphates, with a preference for pyrimidine deoxynucleoside triphosphates (dUTP, dTTP and dCTP). The chain is Nucleoside triphosphatase NudI from Klebsiella pneumoniae (strain 342).